A 578-amino-acid polypeptide reads, in one-letter code: Kelch repeat-containing protein kel-10 (578 aa).

The BTB domain maps to 51–118 (PTVTLVLRNN…PKAFEQGIKP (68 aa)). The 79-residue stretch at 158–236 (IKIFRLALLY…NSPLQSDRMA (79 aa)) folds into the BACK domain. Kelch repeat units lie at residues 265–315 (AIVC…VVED), 316–362 (KLIV…RIND), 368–414 (LIFA…TIDN), 416–462 (IVVI…SIMN), 464–510 (VCMI…QMDT), and 512–558 (SIYV…TLSD).

This chain is Kelch repeat-containing protein kel-10, found in Caenorhabditis elegans.